Consider the following 241-residue polypeptide: Eukaryotic translation initiation factor 3 subunit J (241 aa).

Positions 1–97 (MEEDWEQLSE…EEEDMTPEQK (97 aa)) are disordered. Residues 28–45 (GEDEEEEVKDSWEDEDEL) are compositionally biased toward acidic residues. The stretch at 31 to 119 (EEEEVKDSWE…ESDLKNALDT (89 aa)) forms a coiled coil. Basic and acidic residues-rich tracts occupy residues 46-58 (EEKK…ETPK) and 69-87 (IADK…RLEK).

The protein belongs to the eIF-3 subunit J family. In terms of assembly, component of the eukaryotic translation initiation factor 3 (eIF-3) complex.

It localises to the cytoplasm. In terms of biological role, component of the eukaryotic translation initiation factor 3 (eIF-3) complex, which is involved in protein synthesis of a specialized repertoire of mRNAs and, together with other initiation factors, stimulates binding of mRNA and methionyl-tRNAi to the 40S ribosome. The eIF-3 complex specifically targets and initiates translation of a subset of mRNAs involved in cell proliferation. The protein is Eukaryotic translation initiation factor 3 subunit J of Aedes aegypti (Yellowfever mosquito).